Reading from the N-terminus, the 185-residue chain is Ribosome-recycling factor (185 aa).

Belongs to the RRF family.

Its subcellular location is the cytoplasm. Its function is as follows. Responsible for the release of ribosomes from messenger RNA at the termination of protein biosynthesis. May increase the efficiency of translation by recycling ribosomes from one round of translation to another. This Streptococcus pyogenes serotype M1 protein is Ribosome-recycling factor.